Reading from the N-terminus, the 318-residue chain is MFMINLFLLIIPILLAMAFLTLAERKILGYMQLRKGPNVVGPHGMIQPFADAMKLFIKEPLRPLTSSSSLYTIAPTLALTIALVTWIPLPLPYPLINMNMGLLFILATSSLAVYSILWSGWASNSKYALIGALRAVAQTISYEFTLAIILLSLLLMNGSFTLSTLITTQEYLWLIIPSWPLAMMWFISTLAETNRAPFDLTEGESELVSGFNVEYAAGPFALFFMAEYTNIIMMNALTTTLFLGALYNLHMPETYTTSFAIKTLLLTILFLWVRASYPRFRYDQLMHLLWKNFLPLTLALCMWYVSLPVLASCIPPQA.

Helical transmembrane passes span Phe-2–Leu-22, Thr-76–Ile-96, Leu-102–Ala-122, Leu-146–Ile-166, Tyr-171–Ala-191, Ala-217–Leu-237, Glu-253–Val-273, and Leu-294–Ile-314.

Belongs to the complex I subunit 1 family. As to quaternary structure, core subunit of respiratory chain NADH dehydrogenase (Complex I) which is composed of 45 different subunits.

Its subcellular location is the mitochondrion inner membrane. It catalyses the reaction a ubiquinone + NADH + 5 H(+)(in) = a ubiquinol + NAD(+) + 4 H(+)(out). Core subunit of the mitochondrial membrane respiratory chain NADH dehydrogenase (Complex I) which catalyzes electron transfer from NADH through the respiratory chain, using ubiquinone as an electron acceptor. Essential for the catalytic activity and assembly of complex I. The polypeptide is NADH-ubiquinone oxidoreductase chain 1 (MT-ND1) (Lemur catta (Ring-tailed lemur)).